The chain runs to 415 residues: Fructose-1,6-bisphosphatase, chloroplastic (415 aa).

A chloroplast-targeting transit peptide spans 1-57 (MASIGPATTTAVKLRSSIFNPQSSTLSPSQQCITFTKSLHSFPTATRHNVASGVRCM). Mg(2+) contacts are provided by glutamate 135, glutamate 164, aspartate 185, leucine 187, and aspartate 188. A substrate-binding site is contributed by 188-191 (DGSS). Residues 207 to 232 (SPNDECIVDSDHDDESQLSAEEQRCV) are involved in light regulation. Residues cysteine 231 and cysteine 236 are joined by a disulfide bond. 5 residues coordinate substrate: asparagine 295, tyrosine 327, tyrosine 345, tyrosine 347, and lysine 357. Glutamate 363 lines the Mg(2+) pocket.

The protein belongs to the FBPase class 1 family. As to quaternary structure, homotetramer. Mg(2+) serves as cofactor.

Its subcellular location is the plastid. The protein localises to the chloroplast. It catalyses the reaction beta-D-fructose 1,6-bisphosphate + H2O = beta-D-fructose 6-phosphate + phosphate. The protein operates within carbohydrate biosynthesis; Calvin cycle. This Spinacia oleracea (Spinach) protein is Fructose-1,6-bisphosphatase, chloroplastic.